The chain runs to 641 residues: Acetyl-coenzyme A synthetase (641 aa).

CoA-binding positions include 186–189 (RGGK) and threonine 304. Residues 380–382 (GEP), 404–409 (DTWWQT), aspartate 493, and arginine 508 each bind ATP. Serine 516 contacts CoA. Arginine 519 is an ATP binding site. Mg(2+) contacts are provided by valine 530, histidine 532, and isoleucine 535. At lysine 602 the chain carries N6-acetyllysine.

Belongs to the ATP-dependent AMP-binding enzyme family. The cofactor is Mg(2+). Post-translationally, acetylated. Deacetylation by the SIR2-homolog deacetylase activates the enzyme.

It carries out the reaction acetate + ATP + CoA = acetyl-CoA + AMP + diphosphate. Its function is as follows. Catalyzes the conversion of acetate into acetyl-CoA (AcCoA), an essential intermediate at the junction of anabolic and catabolic pathways. AcsA undergoes a two-step reaction. In the first half reaction, AcsA combines acetate with ATP to form acetyl-adenylate (AcAMP) intermediate. In the second half reaction, it can then transfer the acetyl group from AcAMP to the sulfhydryl group of CoA, forming the product AcCoA. This Gamma-proteobacterium EBAC31A08 protein is Acetyl-coenzyme A synthetase.